The chain runs to 1097 residues: Error-prone DNA polymerase (1097 aa).

The segment at 1039–1097 (PTGRGDEFAHGSPGGGDSRDRSPPKPRDIVVPLCRARHKGIDPEPETMPSAFPKPRDFR) is disordered. The span at 1055-1066 (DSRDRSPPKPRD) shows a compositional bias: basic and acidic residues.

This sequence belongs to the DNA polymerase type-C family. DnaE2 subfamily.

The protein localises to the cytoplasm. The catalysed reaction is DNA(n) + a 2'-deoxyribonucleoside 5'-triphosphate = DNA(n+1) + diphosphate. Its function is as follows. DNA polymerase involved in damage-induced mutagenesis and translesion synthesis (TLS). It is not the major replicative DNA polymerase. The chain is Error-prone DNA polymerase from Allorhizobium ampelinum (strain ATCC BAA-846 / DSM 112012 / S4) (Agrobacterium vitis (strain S4)).